The chain runs to 252 residues: MKNLFKGLMMSLSMFTIIPMPYVEWDEDGAKNMMKCYPIIGLIVGCVWFLGYKLINYLNISIVLKSALIMIIPFIITGMLHLDGFMDVCDAILSRRDKEEKLRILKDSTTGAFSVISVIILFFIQFGAVHSFLEYNKNPYILMFLPIISRNIVAYFFITIITIKESTLGSYFTKGTNIKDKVILILELALVCILFGSILGYIGIAILLIVAVAISLCVKKCFKEFGGISGDVAGFSLVVGEIVGLFSACLFT.

The next 7 membrane-spanning stretches (helical) occupy residues L4 to E24, P38 to L58, I60 to L80, F113 to L133, I141 to I161, L190 to V210, and V232 to T252.

This sequence belongs to the CobS family. Requires Mg(2+) as cofactor.

The protein resides in the cell membrane. It carries out the reaction alpha-ribazole + adenosylcob(III)inamide-GDP = adenosylcob(III)alamin + GMP + H(+). The catalysed reaction is alpha-ribazole 5'-phosphate + adenosylcob(III)inamide-GDP = adenosylcob(III)alamin 5'-phosphate + GMP + H(+). The protein operates within cofactor biosynthesis; adenosylcobalamin biosynthesis; adenosylcobalamin from cob(II)yrinate a,c-diamide: step 7/7. In terms of biological role, joins adenosylcobinamide-GDP and alpha-ribazole to generate adenosylcobalamin (Ado-cobalamin). Also synthesizes adenosylcobalamin 5'-phosphate from adenosylcobinamide-GDP and alpha-ribazole 5'-phosphate. This Clostridium botulinum (strain Alaska E43 / Type E3) protein is Adenosylcobinamide-GDP ribazoletransferase.